A 617-amino-acid chain; its full sequence is V-type proton ATPase catalytic subunit A (617 aa).

ATP is bound at residue 250–257 (GAFGCGKT). A Phosphoserine; by AMPK modification is found at Ser-384.

The protein belongs to the ATPase alpha/beta chains family. As to quaternary structure, V-ATPase is a heteromultimeric enzyme made up of two complexes: the ATP-hydrolytic V1 complex and the proton translocation V0 complex. The V1 complex consists of three catalytic AB heterodimers that form a heterohexamer, three peripheral stalks each consisting of EG heterodimers, one central rotor including subunits D and F, and the regulatory subunits C and H. The proton translocation complex V0 consists of the proton transport subunit a, a ring of proteolipid subunits c9c'', rotary subunit d, subunits e and f, and the accessory subunits ATP6AP1/Ac45 and ATP6AP2/PRR. Interacts with the V0 complex V-ATPase subunit a4 ATP6V0A4. Interacts with WFS1. Interacts with alpha-crystallin B chain/CRYAB and with MTOR, forming a ternary complex. In terms of processing, phosphorylation at Ser-384 by AMPK down-regulates its enzyme activity.

The protein resides in the cytoplasm. Its subcellular location is the cytosol. The protein localises to the cytoplasmic vesicle. It is found in the secretory vesicle. It localises to the clathrin-coated vesicle membrane. The protein resides in the lysosome. The enzyme catalyses ATP + H2O + 4 H(+)(in) = ADP + phosphate + 5 H(+)(out). ATP hydrolysis occurs at the interface between the nucleotide-binding domains of subunits A and B. ATP hydrolysis triggers a conformational change in the subunits D and F, which induces a shift of subunit d. The c-ring is subsequently rotated and results in a continuous proton translocation across the membrane. In terms of biological role, catalytic subunit of the V1 complex of vacuolar(H+)-ATPase (V-ATPase), a multisubunit enzyme composed of a peripheral complex (V1) that hydrolyzes ATP and a membrane integral complex (V0) that translocates protons. V-ATPase is responsible for acidifying and maintaining the pH of intracellular compartments and in some cell types, is targeted to the plasma membrane, where it is responsible for acidifying the extracellular environment. In aerobic conditions, involved in intracellular iron homeostasis, thus triggering the activity of Fe(2+) prolyl hydroxylase (PHD) enzymes, and leading to HIF1A hydroxylation and subsequent proteasomal degradation. May play a role in neurite development and synaptic connectivity. The protein is V-type proton ATPase catalytic subunit A (Atp6v1a) of Mus musculus (Mouse).